The following is a 402-amino-acid chain: Homoserine O-acetyltransferase (402 aa).

In terms of domain architecture, AB hydrolase-1 spans 38–359 (NAVLVCHALT…HGHDAFLVEP (322 aa)). The Nucleophile role is filled by S146. R217 contacts substrate. Catalysis depends on residues D319 and H352. A substrate-binding site is contributed by D353.

It belongs to the AB hydrolase superfamily. MetX family. As to quaternary structure, homodimer.

It localises to the cytoplasm. The catalysed reaction is L-homoserine + acetyl-CoA = O-acetyl-L-homoserine + CoA. Its pathway is amino-acid biosynthesis; L-methionine biosynthesis via de novo pathway; O-acetyl-L-homoserine from L-homoserine: step 1/1. Transfers an acetyl group from acetyl-CoA to L-homoserine, forming acetyl-L-homoserine. The polypeptide is Homoserine O-acetyltransferase (Haloarcula marismortui (strain ATCC 43049 / DSM 3752 / JCM 8966 / VKM B-1809) (Halobacterium marismortui)).